A 476-amino-acid chain; its full sequence is Bifunctional protein HldE (476 aa).

The ribokinase stretch occupies residues 1-319 (MKVSLPAFEK…RALSVNHGES (319 aa)). Residue 195-198 (NMGE) participates in ATP binding. Residue Asp-264 is part of the active site. The tract at residues 345–476 (MTNGCFDILH…SIIENIMANQ (132 aa)) is cytidylyltransferase.

It in the N-terminal section; belongs to the carbohydrate kinase PfkB family. In the C-terminal section; belongs to the cytidylyltransferase family. Homodimer.

The catalysed reaction is D-glycero-beta-D-manno-heptose 7-phosphate + ATP = D-glycero-beta-D-manno-heptose 1,7-bisphosphate + ADP + H(+). It catalyses the reaction D-glycero-beta-D-manno-heptose 1-phosphate + ATP + H(+) = ADP-D-glycero-beta-D-manno-heptose + diphosphate. The protein operates within nucleotide-sugar biosynthesis; ADP-L-glycero-beta-D-manno-heptose biosynthesis; ADP-L-glycero-beta-D-manno-heptose from D-glycero-beta-D-manno-heptose 7-phosphate: step 1/4. It participates in nucleotide-sugar biosynthesis; ADP-L-glycero-beta-D-manno-heptose biosynthesis; ADP-L-glycero-beta-D-manno-heptose from D-glycero-beta-D-manno-heptose 7-phosphate: step 3/4. Catalyzes the phosphorylation of D-glycero-D-manno-heptose 7-phosphate at the C-1 position to selectively form D-glycero-beta-D-manno-heptose-1,7-bisphosphate. Functionally, catalyzes the ADP transfer from ATP to D-glycero-beta-D-manno-heptose 1-phosphate, yielding ADP-D-glycero-beta-D-manno-heptose. This chain is Bifunctional protein HldE, found in Shewanella sediminis (strain HAW-EB3).